The primary structure comprises 333 residues: MLILGIDTSCDDTSVAVLENRNILSNIVSSQIKFHSKYGGIVPEIASRKHIEWIWDVTEKALSEAKTDLKDIDLIAVCYGPGLIGSLLVGLCFAKSLSYASGKPLVGVNHIEGHIQAIFLEKSYPEYPFLCLIVSGGHTSLYRVNDFGAYKELGRTRDDAAGEAYDKVAKMLGLGYPGGPVIDALAKEGCNEKFNLPRPYLHGSLDFSFSGLKTAIKVLLKNLGYKEGNVPDEIKKDIAASFQTSVVDVLIEKIKWAISSEKLNRVVITGGVAANSELRRRAEMLKDKGINVYLPSKSLCTDNAAMIAITGYNKFLKGEISDLFLNARAYLPL.

Residues His-110 and His-114 each coordinate Fe cation. Substrate is bound by residues 133–137, Asp-166, Gly-179, Asp-183, and Asn-275; that span reads IVSGG. Asp-302 lines the Fe cation pocket.

The protein belongs to the KAE1 / TsaD family. Fe(2+) is required as a cofactor.

The protein resides in the cytoplasm. The catalysed reaction is L-threonylcarbamoyladenylate + adenosine(37) in tRNA = N(6)-L-threonylcarbamoyladenosine(37) in tRNA + AMP + H(+). In terms of biological role, required for the formation of a threonylcarbamoyl group on adenosine at position 37 (t(6)A37) in tRNAs that read codons beginning with adenine. Is involved in the transfer of the threonylcarbamoyl moiety of threonylcarbamoyl-AMP (TC-AMP) to the N6 group of A37, together with TsaE and TsaB. TsaD likely plays a direct catalytic role in this reaction. In Thermodesulfovibrio yellowstonii (strain ATCC 51303 / DSM 11347 / YP87), this protein is tRNA N6-adenosine threonylcarbamoyltransferase.